The sequence spans 627 residues: (+)-sabinene synthase, chloroplastic (627 aa).

A chloroplast-targeting transit peptide spans 1 to 46; the sequence is MSVISIVPLASNSCLYKSLMSSTHELKALCRPIATLGMCRRGKSVM. Residues Asp-378, Asp-382, and Asp-530 each coordinate Mg(2+). Positions 378–382 match the DDXXD motif motif; sequence DDIYD.

It belongs to the terpene synthase family. Tpsd subfamily. In terms of assembly, monomer. Mg(2+) is required as a cofactor.

The protein resides in the plastid. It is found in the chloroplast. The catalysed reaction is (2E)-geranyl diphosphate = (1R,5R)-sabinene + diphosphate. The protein operates within terpene metabolism; oleoresin biosynthesis. Its function is as follows. Terpene synthase (TPS) involved in defensive oleoresin formation in conifers in response to insect attack (e.g. white pine weevil P.strobi) or other injury. Produces (+)-sabinene from geranyl diphosphate, but has no activity with geranylgeranyl diphosphate or farnesyl diphosphate. This is (+)-sabinene synthase, chloroplastic (TPS-sab) from Picea sitchensis (Sitka spruce).